The following is a 320-amino-acid chain: Ribosomal large subunit pseudouridine synthase C (320 aa).

One can recognise an S4 RNA-binding domain in the interval 20–83 (QRIDNFLLAK…AEREEVQVSA (64 aa)). Asp144 is an active-site residue.

Belongs to the pseudouridine synthase RluA family.

The enzyme catalyses uridine(955/2504/2580) in 23S rRNA = pseudouridine(955/2504/2580) in 23S rRNA. Functionally, responsible for synthesis of pseudouridine from uracil at positions 955, 2504 and 2580 in 23S ribosomal RNA. The chain is Ribosomal large subunit pseudouridine synthase C (rluC) from Yersinia pestis.